A 379-amino-acid chain; its full sequence is Glutamate 5-kinase (379 aa).

Residue lysine 15 coordinates ATP. Residues serine 59, aspartate 146, and asparagine 158 each contribute to the substrate site. Position 178 to 179 (178 to 179 (TD)) interacts with ATP. Residues 285 to 363 (RGAVTVDVGA…SEFERLLGYS (79 aa)) form the PUA domain.

The protein belongs to the glutamate 5-kinase family.

Its subcellular location is the cytoplasm. The enzyme catalyses L-glutamate + ATP = L-glutamyl 5-phosphate + ADP. It participates in amino-acid biosynthesis; L-proline biosynthesis; L-glutamate 5-semialdehyde from L-glutamate: step 1/2. In terms of biological role, catalyzes the transfer of a phosphate group to glutamate to form L-glutamate 5-phosphate. This chain is Glutamate 5-kinase, found in Paracidovorax citrulli (strain AAC00-1) (Acidovorax citrulli).